Reading from the N-terminus, the 253-residue chain is Major prion protein (253 aa).

The N-terminal stretch at 1-22 is a signal peptide; sequence MANLGCWMLVLFVATWSDLGLC. The interaction with ADGRG6 stretch occupies residues 23-38; the sequence is KKRPKPGGWNTGGSRY. An interaction with GRB2, ERI3 and SYN1 region spans residues 23-230; it reads KKRPKPGGWN…ESQAYYQRGS (208 aa). The disordered stretch occupies residues 26–108; the sequence is PKPGGWNTGG…WNKPSKPKTS (83 aa). 5 tandem repeats follow at residues 51 to 59, 60 to 67, 68 to 75, 76 to 83, and 84 to 91. Positions 51–91 are 5 X 8 AA tandem repeats of P-H-G-G-G-W-G-Q; it reads PQGGGGWGQPHGGGWGQPHGGGWGQPHGGGWGQPHGGGWGQ. Gly residues predominate over residues 52–95; sequence QGGGGWGQPHGGGWGQPHGGGWGQPHGGGWGQPHGGGWGQGGGT. Residues histidine 61, glycine 62, glycine 63, histidine 69, glycine 70, glycine 71, histidine 77, glycine 78, glycine 79, histidine 85, glycine 86, and glycine 87 each contribute to the Cu(2+) site. Residues cysteine 179 and cysteine 214 are joined by a disulfide bond. Asparagine 181 and asparagine 197 each carry an N-linked (GlcNAc...) asparagine glycan. A lipid anchor (GPI-anchor amidated serine) is attached at serine 230. The propeptide at 231-253 is removed in mature form; the sequence is SMVLFSSPPVILLISFLIFLIVG.

The protein belongs to the prion family. As to quaternary structure, monomer and homodimer. Has a tendency to aggregate into amyloid fibrils containing a cross-beta spine, formed by a steric zipper of superposed beta-strands. Soluble oligomers may represent an intermediate stage on the path to fibril formation. Copper binding may promote oligomerization. Interacts with GRB2, APP, ERI3/PRNPIP and SYN1. Mislocalized cytosolically exposed PrP interacts with MGRN1; this interaction alters MGRN1 subcellular location and causes lysosomal enlargement. Interacts with APP. Interacts with KIAA1191. Interacts with ADGRG6.

It localises to the cell membrane. Its subcellular location is the golgi apparatus. In terms of biological role, its primary physiological function is unclear. May play a role in neuronal development and synaptic plasticity. May be required for neuronal myelin sheath maintenance. May promote myelin homeostasis through acting as an agonist for ADGRG6 receptor. May play a role in iron uptake and iron homeostasis. Soluble oligomers are toxic to cultured neuroblastoma cells and induce apoptosis (in vitro). Association with GPC1 (via its heparan sulfate chains) targets PRNP to lipid rafts. Also provides Cu(2+) or Zn(2+) for the ascorbate-mediated GPC1 deaminase degradation of its heparan sulfate side chains. This chain is Major prion protein (PRNP), found in Colobus guereza (Mantled guereza).